Here is a 498-residue protein sequence, read N- to C-terminus: Hexokinase-1 (498 aa).

Residues 4–24 (VTVGAAVVGAAAVCAVAALIV) form a helical membrane-spanning segment. Residues 35-488 (GRAMAILREF…SGIGAALLRA (454 aa)) form the Hexokinase domain. The hexokinase small subdomain stretch occupies residues 89–228 (QLVMKLGVFY…VLDMRVSALV (140 aa)). Positions 104, 105, and 106 each coordinate ADP. Thr-194, Lys-195, Asn-229, and Asp-230 together coordinate D-glucose. The interval 229-477 (NDTVGTLAGG…TSIVFVHSND (249 aa)) is hexokinase large subdomain. Thr-253 contacts ADP. Asn-256, Glu-284, and Glu-315 together coordinate D-glucose. Residue Gly-442 coordinates ADP.

The protein belongs to the hexokinase family. As to expression, expressed in young and mature leaves, stems, roots, stolons, and developing and mature tubers.

The protein localises to the plastid. It is found in the chloroplast outer membrane. The enzyme catalyses a D-hexose + ATP = a D-hexose 6-phosphate + ADP + H(+). The catalysed reaction is D-fructose + ATP = D-fructose 6-phosphate + ADP + H(+). It catalyses the reaction D-glucose + ATP = D-glucose 6-phosphate + ADP + H(+). It functions in the pathway carbohydrate metabolism; hexose metabolism. Its pathway is carbohydrate degradation; glycolysis; D-glyceraldehyde 3-phosphate and glycerone phosphate from D-glucose: step 1/4. Functionally, fructose and glucose phosphorylating enzyme. May be involved in the phosphorylation of glucose during the export from plastids to cytosol. Seems neither to be involved in cell sugar sensing nor in carbohydrate metabolism in tuber. This Solanum tuberosum (Potato) protein is Hexokinase-1 (HXK1).